The primary structure comprises 394 residues: Small ribosomal subunit protein mS79 (rPPR3b) (394 aa).

The transit peptide at 1–24 directs the protein to the mitochondrion; sequence MSSLSRFLLRGNFSFSTHTNRRFF. PPR repeat units lie at residues 105–139, 140–170, 176–210, 211–245, 246–280, 281–315, 316–350, and 351–385; these read KEGF…NCKR, TALS…LPGK, DVAS…GLKP, DHIT…NVKR, DIRS…ELKP, DVFT…GCRP, LKFV…RLLV, and DEAV…DYLQ.

Belongs to the PPR family. P subfamily. As to quaternary structure, component of the mitochondrial ribosome small subunit.

Its subcellular location is the mitochondrion. The polypeptide is Small ribosomal subunit protein mS79 (rPPR3b) (Arabidopsis thaliana (Mouse-ear cress)).